Here is a 209-residue protein sequence, read N- to C-terminus: Na(+)-translocating NADH-quinone reductase subunit D (209 aa).

The next 5 helical transmembrane spans lie at 42 to 62 (LVMTLAVTLVTAFSSFFISLI), 70 to 90 (VRIIVQMVIIASLVIVVDQIL), 103 to 123 (VFVGLIITNCIVMGRAEAYAM), 131 to 151 (FMDGIGNGLGYGVVLVLVGFV), and 178 to 198 (NGLFLLAPSAFFIIGLLIWGL).

The protein belongs to the NqrDE/RnfAE family. Composed of six subunits; NqrA, NqrB, NqrC, NqrD, NqrE and NqrF.

The protein localises to the cell inner membrane. The enzyme catalyses a ubiquinone + n Na(+)(in) + NADH + H(+) = a ubiquinol + n Na(+)(out) + NAD(+). Its function is as follows. NQR complex catalyzes the reduction of ubiquinone-1 to ubiquinol by two successive reactions, coupled with the transport of Na(+) ions from the cytoplasm to the periplasm. NqrA to NqrE are probably involved in the second step, the conversion of ubisemiquinone to ubiquinol. The sequence is that of Na(+)-translocating NADH-quinone reductase subunit D from Yersinia enterocolitica serotype O:8 / biotype 1B (strain NCTC 13174 / 8081).